A 385-amino-acid polypeptide reads, in one-letter code: 26S proteasome non-ATPase regulatory subunit 13 (385 aa).

The PCI domain maps to 176–347 (EFYKNALMYL…EIIHITWVTP (172 aa)).

It belongs to the proteasome subunit S11 family.

Acts as a regulatory subunit of the 26S proteasome which is involved in the ATP-dependent degradation of ubiquitinated proteins. The polypeptide is 26S proteasome non-ATPase regulatory subunit 13 (psmD13) (Dictyostelium discoideum (Social amoeba)).